The chain runs to 459 residues: Asperlicin C monooxygenase (459 aa).

FAD is bound by residues D49, A62, and R121. The active site involves R199. D323 and A336 together coordinate FAD.

It belongs to the paxM FAD-dependent monooxygenase family. The cofactor is FAD.

The catalysed reaction is asperlicin C + NADPH + O2 + H(+) = asperlicin E + NADP(+) + H2O. It catalyses the reaction asperlicin C + NADH + O2 + H(+) = asperlicin E + NAD(+) + H2O. Its function is as follows. Catalyzes the conversion of asperlicin A to form asperlicin E, a potent cholecystokinin receptor CCK(A) antagonist. In Petromyces alliaceus (Aspergillus alliaceus), this protein is Asperlicin C monooxygenase.